The sequence spans 223 residues: DNA mismatch repair protein MutH (223 aa).

The protein belongs to the MutH family.

The protein resides in the cytoplasm. Its function is as follows. Sequence-specific endonuclease that cleaves unmethylated GATC sequences. It is involved in DNA mismatch repair. In Haemophilus influenzae (strain PittEE), this protein is DNA mismatch repair protein MutH.